A 413-amino-acid chain; its full sequence is RING-H2 finger protein ATL54 (413 aa).

The helical transmembrane segment at 83–103 threads the bilayer; that stretch reads ISIITITGAVLAILLTGFFLV. The segment at 177-219 adopts an RING-type; atypical zinc-finger fold; it reads CPVCLNEFEEDESLRLLPKCNHAFHISCIDTWLSSHTNCPLCR. 2 disordered regions span residues 238-258 and 321-413; these read VTPG…EDHG and THVE…VFPL. Over residues 387-401 the composition is skewed to low complexity; sequence SSSTLKTNGSSSSVS. Residues 402–413 show a composition bias toward polar residues; it reads CFNKNKSSVFPL.

It belongs to the RING-type zinc finger family. ATL subfamily.

It is found in the membrane. The enzyme catalyses S-ubiquitinyl-[E2 ubiquitin-conjugating enzyme]-L-cysteine + [acceptor protein]-L-lysine = [E2 ubiquitin-conjugating enzyme]-L-cysteine + N(6)-ubiquitinyl-[acceptor protein]-L-lysine.. The protein operates within protein modification; protein ubiquitination. The chain is RING-H2 finger protein ATL54 (ATL54) from Arabidopsis thaliana (Mouse-ear cress).